Reading from the N-terminus, the 71-residue chain is Guanine nucleotide-binding protein G(I)/G(S)/G(O) subunit gamma-2 (71 aa).

Position 2 is an N-acetylalanine (Ala-2). At Cys-68 the chain carries Cysteine methyl ester. Residue Cys-68 is the site of S-geranylgeranyl cysteine attachment. A propeptide spans 69 to 71 (AIL) (removed in mature form).

Belongs to the G protein gamma family. G proteins are composed of 3 units, alpha, beta and gamma. In this context, interacts with GNB2. The heterodimer formed by GNB1 and GNG2 interacts with ARHGEF5. The heterodimer formed by GNB1 and GNG2 interacts with GRK2. Component of the TAS2R14-GNAI1 complex, consisting of TAS2R14, GNAI1, GNB1 and GNG2. Forms complexes with TAS2R14 and G-proteins; these complexes play a role in the perception of bitterness. Component of the TAS2R14-GNAT3 complex, consisting of TAS2R14, GNAT3, GNB1 and GNG2. Component of the TAS2R14-GNAS2 complex, consisting of TAS2R14, GNAS2, GNB1 and GNG2. Adrenal gland and brain.

It localises to the cell membrane. Functionally, guanine nucleotide-binding proteins (G proteins) are involved as a modulator or transducer in various transmembrane signaling systems. The beta and gamma chains are required for the GTPase activity, for replacement of GDP by GTP, and for G protein-effector interaction. The protein is Guanine nucleotide-binding protein G(I)/G(S)/G(O) subunit gamma-2 (GNG2) of Bos taurus (Bovine).